Here is a 40-residue protein sequence, read N- to C-terminus: MEALVYTFLLVGTLGIIFFAIFFRDPPKVPSKGVPSKGKK.

The chain crosses the membrane as a helical span at residues 3–23 (ALVYTFLLVGTLGIIFFAIFF).

It belongs to the PsbT family. In terms of assembly, PSII is composed of 1 copy each of membrane proteins PsbA, PsbB, PsbC, PsbD, PsbE, PsbF, PsbH, PsbI, PsbJ, PsbK, PsbL, PsbM, PsbT, PsbY, PsbZ, Psb30/Ycf12, at least 3 peripheral proteins of the oxygen-evolving complex and a large number of cofactors. It forms dimeric complexes.

Its subcellular location is the plastid. It is found in the chloroplast thylakoid membrane. Found at the monomer-monomer interface of the photosystem II (PS II) dimer, plays a role in assembly and dimerization of PSII. PSII is a light-driven water plastoquinone oxidoreductase, using light energy to abstract electrons from H(2)O, generating a proton gradient subsequently used for ATP formation. This Anthoceros angustus (Hornwort) protein is Photosystem II reaction center protein T.